A 270-amino-acid chain; its full sequence is uncharacterized protein (270 aa).

The first 22 residues, 1 to 22 (MEYIKKIALYMSVLLLIIFIGG), serve as a signal peptide directing secretion. The N-palmitoyl cysteine moiety is linked to residue cysteine 23. Cysteine 23 is lipidated: S-diacylglycerol cysteine.

This sequence belongs to the staphylococcal tandem lipoprotein family.

It is found in the cell membrane. This is an uncharacterized protein from Staphylococcus aureus (strain NCTC 8325 / PS 47).